Here is a 343-residue protein sequence, read N- to C-terminus: Cytoplasmic tRNA 2-thiolation protein 1 (343 aa).

The protein belongs to the TtcA family. CTU1/NCS6/ATPBD3 subfamily.

It localises to the cytoplasm. The protein operates within tRNA modification; 5-methoxycarbonylmethyl-2-thiouridine-tRNA biosynthesis. Plays a central role in 2-thiolation of mcm(5)S(2)U at tRNA wobble positions of tRNA(Lys), tRNA(Glu) and tRNA(Gln). Directly binds tRNAs and probably acts by catalyzing adenylation of tRNAs, an intermediate required for 2-thiolation. It is unclear whether it acts as a sulfurtransferase that transfers sulfur from thiocarboxylated URM1 onto the uridine of tRNAs at wobble position. This is Cytoplasmic tRNA 2-thiolation protein 1 from Drosophila willistoni (Fruit fly).